Reading from the N-terminus, the 185-residue chain is Protein GrpE (185 aa).

Residues 1-11 show a composition bias toward polar residues; sequence MENTQENPTDQ. Positions 1–38 are disordered; that stretch reads MENTQENPTDQTTEETGREAQAAEPAAQAAENAAPAAE. Positions 19–38 are enriched in low complexity; sequence EAQAAEPAAQAAENAAPAAE.

It belongs to the GrpE family. In terms of assembly, homodimer.

Its subcellular location is the cytoplasm. Functionally, participates actively in the response to hyperosmotic and heat shock by preventing the aggregation of stress-denatured proteins, in association with DnaK and GrpE. It is the nucleotide exchange factor for DnaK and may function as a thermosensor. Unfolded proteins bind initially to DnaJ; upon interaction with the DnaJ-bound protein, DnaK hydrolyzes its bound ATP, resulting in the formation of a stable complex. GrpE releases ADP from DnaK; ATP binding to DnaK triggers the release of the substrate protein, thus completing the reaction cycle. Several rounds of ATP-dependent interactions between DnaJ, DnaK and GrpE are required for fully efficient folding. The sequence is that of Protein GrpE from Burkholderia mallei (strain NCTC 10247).